Here is a 509-residue protein sequence, read N- to C-terminus: Sensor histidine kinase TrcS (509 aa).

The next 2 helical transmembrane spans lie at 24-44 (LLLG…VVSV) and 188-208 (VALV…VVGY). The 63-residue stretch at 207-269 (GYALRPLRRV…LLDNVDGALA (63 aa)) folds into the HAMP domain. The Histidine kinase domain occupies 284–502 (DASHELRTPL…VFRVRLPMIE (219 aa)). His-287 is subject to Phosphohistidine; by autocatalysis.

Requires a divalent metal cation as cofactor. Autophosphorylated.

It is found in the cell membrane. It catalyses the reaction ATP + protein L-histidine = ADP + protein N-phospho-L-histidine.. Member of the two-component regulatory system TrcS/TrcR. Phosphorylates TrcR. The TrcR-TrcS regulatory system may act as a transition regulatory system involved in adapting to an intracellular environment and transitioning from latency to reactivation. In Mycobacterium tuberculosis (strain ATCC 25618 / H37Rv), this protein is Sensor histidine kinase TrcS.